The following is a 217-amino-acid chain: Glutathione S-transferase (217 aa).

Positions 2–82 (TIKVHGNPRS…YLAYTHDHQN (81 aa)) constitute a GST N-terminal domain. Residues Ser11, 40 to 41 (HK), 53 to 54 (QV), and 66 to 67 (ES) each bind glutathione. The region spanning 91–217 (EKHEMAAQLV…EKTLALQKQA (127 aa)) is the GST C-terminal domain.

This sequence belongs to the GST superfamily. Phi family.

The protein localises to the cytoplasm. It carries out the reaction RX + glutathione = an S-substituted glutathione + a halide anion + H(+). Its function is as follows. Conjugation of reduced glutathione to a wide number of exogenous and endogenous hydrophobic electrophiles. The protein is Glutathione S-transferase (GST) of Silene vulgaris (Bladder campion).